Consider the following 302-residue polypeptide: Pyridoxal kinase (302 aa).

Substrate-binding residues include serine 10, threonine 45, and tyrosine 122. ATP-binding positions include 181-182 (TS) and 215-227 (VGPK…TGTG). Residue aspartate 228 coordinates substrate.

This sequence belongs to the pyridoxine kinase family. In terms of assembly, homodimer. A divalent metal cation serves as cofactor.

The protein resides in the cytoplasm. It carries out the reaction pyridoxal + ATP = pyridoxal 5'-phosphate + ADP + H(+). It functions in the pathway cofactor metabolism; pyridoxal 5'-phosphate salvage; pyridoxal 5'-phosphate from pyridoxal: step 1/1. Its function is as follows. Required for synthesis of pyridoxal-5-phosphate from vitamin B6. The protein is Pyridoxal kinase (pykA) of Dictyostelium discoideum (Social amoeba).